The primary structure comprises 326 residues: Beta-ketoacyl-[acyl-carrier-protein] synthase III (326 aa).

Residues cysteine 113 and histidine 253 contribute to the active site. Positions 254-258 (QANIR) are ACP-binding. Residue asparagine 283 is part of the active site.

The protein belongs to the thiolase-like superfamily. FabH family. Homodimer.

It localises to the cytoplasm. The catalysed reaction is malonyl-[ACP] + acetyl-CoA + H(+) = 3-oxobutanoyl-[ACP] + CO2 + CoA. It participates in lipid metabolism; fatty acid biosynthesis. Functionally, catalyzes the condensation reaction of fatty acid synthesis by the addition to an acyl acceptor of two carbons from malonyl-ACP. Catalyzes the first condensation reaction which initiates fatty acid synthesis and may therefore play a role in governing the total rate of fatty acid production. Possesses both acetoacetyl-ACP synthase and acetyl transacylase activities. Its substrate specificity determines the biosynthesis of branched-chain and/or straight-chain of fatty acids. The sequence is that of Beta-ketoacyl-[acyl-carrier-protein] synthase III from Wolbachia sp. subsp. Brugia malayi (strain TRS).